An 815-amino-acid polypeptide reads, in one-letter code: Probable E3 ubiquitin-protein ligase hulA (815 aa).

The region spanning 1–112 is the C2 domain; sequence MGSNLPSQPN…EMGGDEMLTR (112 aa). 2 disordered regions span residues 134 to 237 and 253 to 353; these read NLST…GWER and RTTT…YFVD. Composition is skewed to low complexity over residues 165–185 and 202–212; these read ASAA…SNPS and APGAAAGATPT. 2 stretches are compositionally biased toward polar residues: residues 213-226 and 253-270; these read NTQG…SFED and RTTT…QTQR. The region spanning 229-262 is the WW 1 domain; the sequence is GRLPAGWERREDNLGRTYYVDHNTRTTTWTRPSS. The segment covering 279 to 294 has biased composition (basic and acidic residues); the sequence is LERRAHQSRMLPEDRT. Over residues 295-308 the composition is skewed to polar residues; the sequence is GANSPNLPETSQQA. The segment covering 324–333 has biased composition (low complexity); sequence ATGATTAGTG. WW domains lie at 333–366 and 393–426; these read GELP…DPRR and GPLP…DPRL. The region spanning 482–815 is the HECT domain; sequence SASDLKKRLM…VEETLGFGQE (334 aa). The active-site Glycyl thioester intermediate is the Cys783.

This sequence belongs to the RSP5/NEDD4 family. Interacts with creD.

It localises to the cytoplasm. The catalysed reaction is S-ubiquitinyl-[E2 ubiquitin-conjugating enzyme]-L-cysteine + [acceptor protein]-L-lysine = [E2 ubiquitin-conjugating enzyme]-L-cysteine + N(6)-ubiquitinyl-[acceptor protein]-L-lysine.. Its pathway is protein modification; protein ubiquitination. Its function is as follows. E3 ubiquitin-protein ligase which accepts ubiquitin from an E2 ubiquitin-conjugating enzyme in the form of a thioester and then directly transfers the ubiquitin to targeted substrates. Probably involved in the regulatory network controlling carbon source utilization. The sequence is that of Probable E3 ubiquitin-protein ligase hulA (hulA) from Aspergillus clavatus (strain ATCC 1007 / CBS 513.65 / DSM 816 / NCTC 3887 / NRRL 1 / QM 1276 / 107).